We begin with the raw amino-acid sequence, 329 residues long: D-lactate dehydrogenase (329 aa).

NAD(+) contacts are provided by residues 154-155 (KI), D174, 205-206 (CP), N211, 232-234 (TSR), and D258. R234 is a catalytic residue. Residue E263 is part of the active site. The active-site Proton donor is the H295.

The protein belongs to the D-isomer specific 2-hydroxyacid dehydrogenase family.

The catalysed reaction is (R)-lactate + NAD(+) = pyruvate + NADH + H(+). Functionally, fermentative lactate dehydrogenase. The protein is D-lactate dehydrogenase (ldhA) of Escherichia coli (strain K12).